A 242-amino-acid polypeptide reads, in one-letter code: uncharacterized protein (242 aa).

Residues 1 to 20 form the signal peptide; it reads MTFIKGLPLMLLTISLGCNA.

Belongs to the periplasmic pilus chaperone family.

The protein localises to the periplasm. Functionally, could be required for the biogenesis of the putative YbgD fimbria. This is an uncharacterized protein from Escherichia coli (strain K12).